Here is a 179-residue protein sequence, read N- to C-terminus: Acireductone dioxygenase (179 aa).

Fe(2+)-binding residues include H100, H102, E106, and H145. Ni(2+) contacts are provided by H100, H102, E106, and H145.

The protein belongs to the acireductone dioxygenase (ARD) family. As to quaternary structure, monomer. It depends on Fe(2+) as a cofactor. The cofactor is Ni(2+).

It catalyses the reaction 1,2-dihydroxy-5-(methylsulfanyl)pent-1-en-3-one + O2 = 3-(methylsulfanyl)propanoate + CO + formate + 2 H(+). The enzyme catalyses 1,2-dihydroxy-5-(methylsulfanyl)pent-1-en-3-one + O2 = 4-methylsulfanyl-2-oxobutanoate + formate + 2 H(+). Its pathway is amino-acid biosynthesis; L-methionine biosynthesis via salvage pathway; L-methionine from S-methyl-5-thio-alpha-D-ribose 1-phosphate: step 5/6. Functionally, catalyzes 2 different reactions between oxygen and the acireductone 1,2-dihydroxy-3-keto-5-methylthiopentene (DHK-MTPene) depending upon the metal bound in the active site. Fe-containing acireductone dioxygenase (Fe-ARD) produces formate and 2-keto-4-methylthiobutyrate (KMTB), the alpha-ketoacid precursor of methionine in the methionine recycle pathway. Ni-containing acireductone dioxygenase (Ni-ARD) produces methylthiopropionate, carbon monoxide and formate, and does not lie on the methionine recycle pathway. The chain is Acireductone dioxygenase from Bacillus licheniformis (strain ATCC 14580 / DSM 13 / JCM 2505 / CCUG 7422 / NBRC 12200 / NCIMB 9375 / NCTC 10341 / NRRL NRS-1264 / Gibson 46).